The primary structure comprises 1061 residues: Eukaryotic translation initiation factor 3 subunit A (1061 aa).

Positions 114–126 (QSSIEATTGSSSV) are enriched in polar residues. A disordered region spans residues 114-133 (QSSIEATTGSSSVEDLEASE). The PCI domain occupies 339–523 (LQKAATFVVL…GVLSFDVDVF (185 aa)). Coiled-coil stretches lie at residues 609–724 (EVIQ…KRLD) and 789–906 (RADL…AAAA). The segment covering 828-901 (REKREREEKE…EAMARRRAEK (74 aa)) has biased composition (basic and acidic residues). The segment at 828-1061 (REKREREEKE…KYVPKFRREG (234 aa)) is disordered. 2 stretches are compositionally biased toward pro residues: residues 950–962 (SGPP…PPPI) and 1000–1011 (APPPERSGPPPR).

It belongs to the eIF-3 subunit A family. Component of the eukaryotic translation initiation factor 3 (eIF-3) complex.

It localises to the cytoplasm. Functionally, RNA-binding component of the eukaryotic translation initiation factor 3 (eIF-3) complex, which is involved in protein synthesis of a specialized repertoire of mRNAs and, together with other initiation factors, stimulates binding of mRNA and methionyl-tRNAi to the 40S ribosome. The eIF-3 complex specifically targets and initiates translation of a subset of mRNAs involved in cell proliferation. The protein is Eukaryotic translation initiation factor 3 subunit A of Chaetomium globosum (strain ATCC 6205 / CBS 148.51 / DSM 1962 / NBRC 6347 / NRRL 1970) (Soil fungus).